A 688-amino-acid polypeptide reads, in one-letter code: Envelope glycoprotein gp70 (688 aa).

Over residues 1 to 15 the composition is skewed to polar residues; it reads MPKHQSGSPTDSSDL. Residues 1-37 are disordered; the sequence is MPKHQSGSPTDSSDLLLSGKKQRPHLALRRKRRREMR. The signal sequence occupies residues 1–98; it reads MPKHQSGSPT…SVLGPPPVTG (98 aa). The segment covering 20-37 has biased composition (basic residues); the sequence is KKQRPHLALRRKRRREMR. At 99–624 the chain is on the extracellular side; that stretch reads ESYWAYLPKP…ALNPLDWTQY (526 aa). Residues Asn127 and Asn143 are each glycosylated (N-linked (GlcNAc...) asparagine; by host). Residues 426–474 are a coiled coil; the sequence is LLPVDIGDEPWFDDSAIQTFRYATDLIRAKRFVAAIILGISALIAIITS. The propeptide occupies 455–456; that stretch reads KR. The fusion peptide stretch occupies residues 457–477; that stretch reads FVAAIILGISALIAIITSFAV. Residues 463–481 form an immunosuppression region; sequence LGISALIAIITSFAVATTA. N-linked (GlcNAc...) asparagine; by host glycosylation is present at Asn498. Residues 511–541 are a coiled coil; the sequence is LKLEARLNALEEVVLELGQDVANLKTRMSTR. Asn557 is a glycosylation site (N-linked (GlcNAc...) asparagine; by host). Residues 625–645 traverse the membrane as a helical segment; it reads FIFIGVGALLLVIVLMIFPIV. Over 646–688 the chain is Cytoplasmic; it reads FQCLAKSLDQVQSDLNVLLLKKKKGGNAAPAAEMVELPRVSYT.

As to quaternary structure, the mature envelope protein (Env) consists of a trimer of SU-TM heterodimers attached by noncovalent interactions or by a labile interchain disulfide bond. In terms of processing, specific enzymatic cleavages in vivo yield mature proteins. Envelope glycoproteins are synthesized as an inactive precursor that is N-glycosylated and processed likely by host cell furin or by a furin-like protease in the Golgi to yield the mature SU and TM proteins. The cleavage site between SU and TM requires the minimal sequence [KR]-X-[KR]-R.

It localises to the virion membrane. The protein resides in the host cell membrane. Its function is as follows. The surface protein (SU) attaches the virus to the host cell by binding to its receptor. This interaction triggers the refolding of the transmembrane protein (TM) and is thought to activate its fusogenic potential by unmasking its fusion peptide. Fusion occurs at the host cell plasma membrane. Functionally, the transmembrane protein (TM) acts as a class I viral fusion protein. Under the current model, the protein has at least 3 conformational states: pre-fusion native state, pre-hairpin intermediate state, and post-fusion hairpin state. During viral and target cell membrane fusion, the coiled coil regions (heptad repeats) assume a trimer-of-hairpins structure, positioning the fusion peptide in close proximity to the C-terminal region of the ectodomain. The formation of this structure appears to drive apposition and subsequent fusion of viral and target cell membranes. Membranes fusion leads to delivery of the nucleocapsid into the cytoplasm. The polypeptide is Envelope glycoprotein gp70 (env) (Mouse mammary tumor virus (strain BR6) (MMTV)).